The following is a 354-amino-acid chain: Glutamine synthetase (354 aa).

The region spanning 22–101 (IQAEYVWVDG…VLAETYNSDG (80 aa)) is the GS beta-grasp domain. A GS catalytic domain is found at 108–354 (FRHHAAKVME…IIVETTLLNA (247 aa)).

It belongs to the glutamine synthetase family. In terms of assembly, homooctamer.

It localises to the cytoplasm. It carries out the reaction L-glutamate + NH4(+) + ATP = L-glutamine + ADP + phosphate + H(+). The sequence is that of Glutamine synthetase (GLN1) from Hebeloma cylindrosporum.